Here is a 523-residue protein sequence, read N- to C-terminus: UDP-glucuronosyltransferase 3A1 (523 aa).

The signal sequence occupies residues 1 to 22 (MVGQRVLLLVAFLLSGVLLSEA). Residues 23–483 (AKILTISTLG…YAFQQPWHEQ (461 aa)) are Extracellular-facing. N-linked (GlcNAc...) asparagine glycosylation occurs at N52. Residues 484–504 (YLIDVFVFLLGLTLGTMWLCG) form a helical membrane-spanning segment. Residues 505–523 (KLLGVVARWLRGARKVKKT) are Cytoplasmic-facing.

Belongs to the UDP-glycosyltransferase family.

Its subcellular location is the membrane. It carries out the reaction glucuronate acceptor + UDP-alpha-D-glucuronate = acceptor beta-D-glucuronoside + UDP + H(+). Functionally, UDP-glucuronosyltransferases catalyze phase II biotransformation reactions in which lipophilic substrates are conjugated with glucuronic acid to increase water solubility and enhance excretion. They are of major importance in the conjugation and subsequent elimination of potentially toxic xenobiotics and endogenous compounds. The polypeptide is UDP-glucuronosyltransferase 3A1 (UGT3A1) (Homo sapiens (Human)).